The primary structure comprises 614 residues: DNA mismatch repair protein MutL (614 aa).

This sequence belongs to the DNA mismatch repair MutL/HexB family.

In terms of biological role, this protein is involved in the repair of mismatches in DNA. It is required for dam-dependent methyl-directed DNA mismatch repair. May act as a 'molecular matchmaker', a protein that promotes the formation of a stable complex between two or more DNA-binding proteins in an ATP-dependent manner without itself being part of a final effector complex. This Chlorobium phaeovibrioides (strain DSM 265 / 1930) (Prosthecochloris vibrioformis (strain DSM 265)) protein is DNA mismatch repair protein MutL.